We begin with the raw amino-acid sequence, 2032 residues long: Transient receptor potential channel (2032 aa).

Over residues 129-139 the composition is skewed to basic residues; that stretch reads KKTRKHRRRRS. Disordered stretches follow at residues 129 to 162, 197 to 223, 831 to 860, 912 to 945, and 1120 to 1211; these read KKTR…GHAI, QSKG…AVPT, KKAM…MGGV, ANPM…GSQT, and AAEH…EAGN. Polar residues-rich tracts occupy residues 839–855, 935–945, and 1120–1129; these read SRPS…QSTE, SLTSASDGSQT, and AAEHQNDMNY. Residues 1130-1149 are compositionally biased toward low complexity; sequence SSSSSSSSSSSSSSSSSDSS. The span at 1171 to 1185 shows a compositional bias: polar residues; sequence TSQGSAQSLNITSLF. The next 5 helical transmembrane spans lie at 1310–1330, 1332–1352, 1374–1394, 1439–1459, and 1535–1555; these read FWSW…TLLV, TPPR…AFGL, VCSF…VGFF, MIQN…SFGL, and LMTF…IAIF. 4 disordered regions span residues 1753–1779, 1853–1909, 1935–1982, and 1999–2032; these read GTDP…RIRR, HPER…SRDQ, EEED…EEVD, and LNEE…CSDV. A compositionally biased stretch (acidic residues) spans 1935–1947; it reads EEEDEEEDDEEDD. A compositionally biased stretch (basic residues) spans 1951 to 1962; sequence RHHIHPRRKSSR. Positions 2016-2032 are enriched in polar residues; the sequence is SPSSSRADLTSQKCSDV.

This sequence belongs to the transient receptor (TC 1.A.4) family. LTrpC subfamily. Gonads.

The protein localises to the membrane. Its function is as follows. Required for initiation and continuation of postembryonic mitotic cell divisions of gonadal cells Z1 and Z4. Zygotic expression is necessary for hermaphrodite fertility. May be a cation channel. This chain is Transient receptor potential channel (gon-2), found in Caenorhabditis elegans.